The chain runs to 136 residues: Large ribosomal subunit protein bL17 (136 aa).

The protein belongs to the bacterial ribosomal protein bL17 family. In terms of assembly, part of the 50S ribosomal subunit. Contacts protein L32.

The sequence is that of Large ribosomal subunit protein bL17 from Rhodopseudomonas palustris (strain BisB5).